Here is a 153-residue protein sequence, read N- to C-terminus: Lysine-acyltransferase RtxC (153 aa).

Residue H32 is part of the active site.

The protein belongs to the RTX toxin acyltransferase family.

Its subcellular location is the cytoplasm. The catalysed reaction is a fatty acyl-[ACP] + L-lysyl-[protein] = N(6)-(fatty acyl)-L-lysyl-[protein] + holo-[ACP] + H(+). Catalyzes fatty acylation of the protoxin (RtxA) at internal lysine residues, thereby converting it to the active toxin. In Vibrio cholerae serotype O1 (strain ATCC 39315 / El Tor Inaba N16961), this protein is Lysine-acyltransferase RtxC (rtxC).